Reading from the N-terminus, the 271-residue chain is Imidazole glycerol phosphate synthase subunit HisF (271 aa).

Residues Asp12 and Asp136 contribute to the active site.

It belongs to the HisA/HisF family. In terms of assembly, heterodimer of HisH and HisF.

The protein resides in the cytoplasm. The catalysed reaction is 5-[(5-phospho-1-deoxy-D-ribulos-1-ylimino)methylamino]-1-(5-phospho-beta-D-ribosyl)imidazole-4-carboxamide + L-glutamine = D-erythro-1-(imidazol-4-yl)glycerol 3-phosphate + 5-amino-1-(5-phospho-beta-D-ribosyl)imidazole-4-carboxamide + L-glutamate + H(+). It participates in amino-acid biosynthesis; L-histidine biosynthesis; L-histidine from 5-phospho-alpha-D-ribose 1-diphosphate: step 5/9. In terms of biological role, IGPS catalyzes the conversion of PRFAR and glutamine to IGP, AICAR and glutamate. The HisF subunit catalyzes the cyclization activity that produces IGP and AICAR from PRFAR using the ammonia provided by the HisH subunit. The chain is Imidazole glycerol phosphate synthase subunit HisF from Haloarcula marismortui (strain ATCC 43049 / DSM 3752 / JCM 8966 / VKM B-1809) (Halobacterium marismortui).